A 463-amino-acid chain; its full sequence is ATP-dependent protease ATPase subunit HslU (463 aa).

Residues Ile19, Gly61–Glu66, Asp277, Glu341, and Arg413 each bind ATP.

The protein belongs to the ClpX chaperone family. HslU subfamily. A double ring-shaped homohexamer of HslV is capped on each side by a ring-shaped HslU homohexamer. The assembly of the HslU/HslV complex is dependent on binding of ATP.

It localises to the cytoplasm. In terms of biological role, ATPase subunit of a proteasome-like degradation complex; this subunit has chaperone activity. The binding of ATP and its subsequent hydrolysis by HslU are essential for unfolding of protein substrates subsequently hydrolyzed by HslV. HslU recognizes the N-terminal part of its protein substrates and unfolds these before they are guided to HslV for hydrolysis. This chain is ATP-dependent protease ATPase subunit HslU, found in Bacillus cereus (strain ATCC 14579 / DSM 31 / CCUG 7414 / JCM 2152 / NBRC 15305 / NCIMB 9373 / NCTC 2599 / NRRL B-3711).